A 177-amino-acid chain; its full sequence is MSKIGKHPVAIPAGVTASVDGQTVKVKGPKGALEVVLVEEIQASLEGGELKIAMRGETPRHKSMWGMSRTLVANLVEGVTKGFEKKLEINGVGYKAAVAGKNLQLSLGYSHDVIYPIPEGIQIAAPKPTELVVTGINKQQVGQVAAEIREFRGPEPYKGKGVKYAGEFIFRKEGKKK.

This sequence belongs to the universal ribosomal protein uL6 family. Part of the 50S ribosomal subunit.

This protein binds to the 23S rRNA, and is important in its secondary structure. It is located near the subunit interface in the base of the L7/L12 stalk, and near the tRNA binding site of the peptidyltransferase center. This chain is Large ribosomal subunit protein uL6, found in Azorhizobium caulinodans (strain ATCC 43989 / DSM 5975 / JCM 20966 / LMG 6465 / NBRC 14845 / NCIMB 13405 / ORS 571).